Reading from the N-terminus, the 327-residue chain is uncharacterized protein (327 aa).

A helical transmembrane segment spans residues 12-32 (LVVVVVAIAIFTLVLLMLWEG). The disordered stretch occupies residues 149-170 (AFSAVETSEGSDQESEGADEQG). A compositionally biased stretch (acidic residues) spans 157–167 (EGSDQESEGAD). A coiled-coil region spans residues 162 to 227 (ESEGADEQGK…LDEENREVAE (66 aa)).

The protein localises to the membrane. This is an uncharacterized protein from Encephalitozoon cuniculi (strain GB-M1) (Microsporidian parasite).